We begin with the raw amino-acid sequence, 206 residues long: ATP-dependent Clp protease proteolytic subunit (206 aa).

Ser108 serves as the catalytic Nucleophile. The active site involves His133.

This sequence belongs to the peptidase S14 family. Fourteen ClpP subunits assemble into 2 heptameric rings which stack back to back to give a disk-like structure with a central cavity, resembling the structure of eukaryotic proteasomes.

It localises to the cytoplasm. It carries out the reaction Hydrolysis of proteins to small peptides in the presence of ATP and magnesium. alpha-casein is the usual test substrate. In the absence of ATP, only oligopeptides shorter than five residues are hydrolyzed (such as succinyl-Leu-Tyr-|-NHMec, and Leu-Tyr-Leu-|-Tyr-Trp, in which cleavage of the -Tyr-|-Leu- and -Tyr-|-Trp bonds also occurs).. Functionally, cleaves peptides in various proteins in a process that requires ATP hydrolysis. Has a chymotrypsin-like activity. Plays a major role in the degradation of misfolded proteins. This is ATP-dependent Clp protease proteolytic subunit from Chromohalobacter salexigens (strain ATCC BAA-138 / DSM 3043 / CIP 106854 / NCIMB 13768 / 1H11).